Consider the following 595-residue polypeptide: Adenine deaminase 3 (595 aa).

This sequence belongs to the metallo-dependent hydrolases superfamily. Adenine deaminase family. Mn(2+) is required as a cofactor.

It catalyses the reaction adenine + H2O + H(+) = hypoxanthine + NH4(+). This chain is Adenine deaminase 3, found in Rhizobium meliloti (strain 1021) (Ensifer meliloti).